The sequence spans 59 residues: Small integral membrane protein 30 (59 aa).

Residues 1-24 (MNSVSTQLILVLASLLLILPVVEA) form the signal peptide. Over 25–29 (VEAGD) the chain is Extracellular. The helical transmembrane segment at 30 to 50 (AIALLLGVVLSITGICACLGI) threads the bilayer. Residues 51–59 (YARKRNGQM) lie on the Cytoplasmic side of the membrane.

Interacts (via transmembrane domain) with antiviral protein MAVS (via transmembrane domain); the interaction disrupts MAVS interaction with RIGI and inhibits MAVS aggregation, resulting in the repression of type I interferon signaling and innate immune responses.

It is found in the endoplasmic reticulum membrane. Its subcellular location is the mitochondrion membrane. Functionally, negatively regulates antiviral innate immune responses. Disrupts the interaction of antiviral protein MAVS with innate immune receptor RIGI and inhibits MAVS aggregation, resulting in the repression of type I interferon signaling and innate immune responses. This is Small integral membrane protein 30 from Mus musculus (Mouse).